Reading from the N-terminus, the 621-residue chain is Methionine--tRNA ligase (621 aa).

The 'HIGH' region signature appears at 11-21 (PYANGPRHIGH). Residues C143, C146, C156, and C159 each contribute to the Zn(2+) site. A 'KMSKS' region motif is present at residues 347 to 351 (KFSSS). An ATP-binding site is contributed by S350.

It belongs to the class-I aminoacyl-tRNA synthetase family. MetG type 1 subfamily. In terms of assembly, monomer. Zn(2+) serves as cofactor.

The protein resides in the cytoplasm. It catalyses the reaction tRNA(Met) + L-methionine + ATP = L-methionyl-tRNA(Met) + AMP + diphosphate. Its function is as follows. Is required not only for elongation of protein synthesis but also for the initiation of all mRNA translation through initiator tRNA(fMet) aminoacylation. The chain is Methionine--tRNA ligase from Bifidobacterium longum (strain NCC 2705).